A 95-amino-acid polypeptide reads, in one-letter code: Small ribosomal subunit protein bS6 (95 aa).

This sequence belongs to the bacterial ribosomal protein bS6 family.

Binds together with bS18 to 16S ribosomal RNA. This Onion yellows phytoplasma (strain OY-M) protein is Small ribosomal subunit protein bS6.